The sequence spans 248 residues: 23S rRNA (guanosine-2'-O-)-methyltransferase RlmB (248 aa).

S-adenosyl-L-methionine is bound by residues Gly-198, Leu-218, and Leu-227.

It belongs to the class IV-like SAM-binding methyltransferase superfamily. RNA methyltransferase TrmH family. RlmB subfamily.

The protein resides in the cytoplasm. It catalyses the reaction guanosine(2251) in 23S rRNA + S-adenosyl-L-methionine = 2'-O-methylguanosine(2251) in 23S rRNA + S-adenosyl-L-homocysteine + H(+). Specifically methylates the ribose of guanosine 2251 in 23S rRNA. This chain is 23S rRNA (guanosine-2'-O-)-methyltransferase RlmB, found in Pseudomonas aeruginosa (strain ATCC 15692 / DSM 22644 / CIP 104116 / JCM 14847 / LMG 12228 / 1C / PRS 101 / PAO1).